Here is a 418-residue protein sequence, read N- to C-terminus: N-acetylglucosamine-6-phosphate deacetylase (418 aa).

A divalent metal cation is bound at residue Glu154. 165–166 (CH) is a substrate binding site. A divalent metal cation is bound by residues His223 and His244. Substrate contacts are provided by residues 247–248 (NA), Arg255, and 281–284 (DGIH). Residue Asp306 is the Proton donor/acceptor of the active site. 340 to 342 (TAG) lines the substrate pocket.

Belongs to the metallo-dependent hydrolases superfamily. NagA family. A divalent metal cation serves as cofactor.

It carries out the reaction N-acetyl-D-glucosamine 6-phosphate + H2O = D-glucosamine 6-phosphate + acetate. The sequence is that of N-acetylglucosamine-6-phosphate deacetylase from Caenorhabditis elegans.